A 462-amino-acid polypeptide reads, in one-letter code: Cysteine--tRNA ligase (462 aa).

Residue Cys29 participates in Zn(2+) binding. The short motif at 31–41 is the 'HIGH' region element; sequence PTVYDHAHIGN. The Zn(2+) site is built by Cys214, His239, and Glu243. The short motif at 272-276 is the 'KMSKS' region element; it reads KMSKS. Lys275 serves as a coordination point for ATP.

This sequence belongs to the class-I aminoacyl-tRNA synthetase family. In terms of assembly, monomer. The cofactor is Zn(2+).

It is found in the cytoplasm. It carries out the reaction tRNA(Cys) + L-cysteine + ATP = L-cysteinyl-tRNA(Cys) + AMP + diphosphate. This is Cysteine--tRNA ligase from Azorhizobium caulinodans (strain ATCC 43989 / DSM 5975 / JCM 20966 / LMG 6465 / NBRC 14845 / NCIMB 13405 / ORS 571).